Reading from the N-terminus, the 175-residue chain is Gamma-crystallin B (175 aa).

2 consecutive Beta/gamma crystallin 'Greek key' domains span residues 2-40 and 41-83; these read GKIT…RVES and GCWM…HLIP. The connecting peptide stretch occupies residues 84 to 88; sequence PHSGT. 2 consecutive Beta/gamma crystallin 'Greek key' domains span residues 89–129 and 130–172; these read YRMK…NVLE and GSWI…RRVM.

The protein belongs to the beta/gamma-crystallin family. In terms of assembly, monomer.

Its function is as follows. Crystallins are the dominant structural components of the vertebrate eye lens. The sequence is that of Gamma-crystallin B (CRYGB) from Macaca mulatta (Rhesus macaque).